The chain runs to 78 residues: RNA-binding protein Hfq (78 aa).

Positions 9-69 (DHFLNQLRKE…ISTFAPQRNV (61 aa)) constitute a Sm domain.

The protein belongs to the Hfq family. Homohexamer.

Its function is as follows. RNA chaperone that binds small regulatory RNA (sRNAs) and mRNAs to facilitate mRNA translational regulation in response to envelope stress, environmental stress and changes in metabolite concentrations. Also binds with high specificity to tRNAs. The chain is RNA-binding protein Hfq from Halalkalibacterium halodurans (strain ATCC BAA-125 / DSM 18197 / FERM 7344 / JCM 9153 / C-125) (Bacillus halodurans).